We begin with the raw amino-acid sequence, 621 residues long: tRNA uridine 5-carboxymethylaminomethyl modification enzyme MnmG (621 aa).

9-14 (GGGHAG) lines the FAD pocket. 268-282 (GPRYCPSIEDKINRF) lines the NAD(+) pocket.

This sequence belongs to the MnmG family. In terms of assembly, homodimer. Heterotetramer of two MnmE and two MnmG subunits. The cofactor is FAD.

Its subcellular location is the cytoplasm. NAD-binding protein involved in the addition of a carboxymethylaminomethyl (cmnm) group at the wobble position (U34) of certain tRNAs, forming tRNA-cmnm(5)s(2)U34. The protein is tRNA uridine 5-carboxymethylaminomethyl modification enzyme MnmG of Campylobacter fetus subsp. fetus (strain 82-40).